Reading from the N-terminus, the 544-residue chain is U1 small nuclear ribonucleoprotein component PRP42 (544 aa).

HAT repeat units follow at residues 7-39, 51-83, 85-118, 121-156, and 163-195; these read LIHD…YIVK, QLLK…LEYK, GNVS…FCNN, SHQK…QISS, and KYWN…DIMD. The short motif at 230 to 235 is the Nuclear localization signal element; that stretch reads KKKLKK. HAT repeat units follow at residues 255–288, 290–322, 366–397, and 456–488; these read FESK…YTIT, QTDS…WLIN, NLLE…FKTF, and VEKN…LIYF.

Component of the 18S U1 snRNP particle, a subcomplex of the spliceosome.

It is found in the nucleus. Functionally, essential component of the U1 snRNP particle, which recognizes and binds the 5'-splice site of pre-mRNA. Together with other non-snRNP factors, U1 snRNP forms the spliceosomal commitment complex, that targets pre-mRNA to the splicing pathway. U1 snRNP is cotranscriptionally recruited to intron-containing genes. Required for U1 snRNP biogenesis. This chain is U1 small nuclear ribonucleoprotein component PRP42 (PRP42), found in Saccharomyces cerevisiae (strain ATCC 204508 / S288c) (Baker's yeast).